The chain runs to 208 residues: Large ribosomal subunit protein bL25 (208 aa).

Belongs to the bacterial ribosomal protein bL25 family. CTC subfamily. As to quaternary structure, part of the 50S ribosomal subunit; part of the 5S rRNA/L5/L18/L25 subcomplex. Contacts the 5S rRNA. Binds to the 5S rRNA independently of L5 and L18.

This is one of the proteins that binds to the 5S RNA in the ribosome where it forms part of the central protuberance. The polypeptide is Large ribosomal subunit protein bL25 (Acidovorax ebreus (strain TPSY) (Diaphorobacter sp. (strain TPSY))).